Here is a 979-residue protein sequence, read N- to C-terminus: Collagen alpha-2(I) chain (979 aa).

Positions 1–979 are disordered; the sequence is SGGFDFSFLP…FGYEGDFYRA (979 aa). Pro10, Pro13, Pro35, and Pro41 each carry 4-hydroxyproline. Low complexity predominate over residues 28-41; sequence LMGPRGPPGASGAP. The residue at position 88 (Lys88) is a 5-hydroxylysine; alternate. Lys88 carries an O-linked (Gal...) hydroxylysine; alternate glycan. The segment covering 128–157 has biased composition (low complexity); the sequence is VGAPGPAGARGSDGSVGPVGPAGPIGSAGP. Residues 256 to 265 show a composition bias toward gly residues; that stretch reads GESGGKGEPG. Residues 266–276 show a composition bias toward low complexity; it reads SAGPQGPPGSS. Gly residues predominate over residues 298–307; it reads GLRGGPGSRG. A 4-hydroxyproline mark is found at Pro341 and Pro344. The span at 434–443 shows a compositional bias: gly residues; sequence GVQGGKGEQG. 2 stretches are compositionally biased toward low complexity: residues 490 to 507 and 519 to 529; these read PGESGAVGPSGAIGSRGP and EPGVVGAPGTA. The segment covering 530-548 has biased composition (gly residues); sequence GPAGSGGPGERGAAGIPGG. Low complexity-rich tracts occupy residues 570–599 and 606–626; these read RGAPGAVGAPGPAGEAGAAGPAGPAGPRGS and VGPAGPNGFAGPAGAAGQPGA. Residues 627 to 636 show a composition bias toward basic and acidic residues; that stretch reads KGERGTKGPK. Residues 644–654 show a composition bias toward low complexity; that stretch reads PTGPVGSAGPA. The segment covering 664 to 673 has biased composition (gly residues); that stretch reads GSRGDGGPPG. A compositionally biased stretch (low complexity) spans 675-684; sequence TGFPGAAGRT. Residues 721–730 show a composition bias toward gly residues; that stretch reads GETGAGGPPG. Composition is skewed to low complexity over residues 738-765 and 773-783; these read SGEPGTAGPPGTAGPQGLLGAPGILGLP and LPGVAGAVGEP. Residues 784–802 are compositionally biased toward gly residues; sequence GPLGIGPPGARGPSGGDGL. Low complexity-rich tracts occupy residues 811-833 and 841-856; these read YAGNAGPVGAAGAPGPHGSVGPA and EPGPVGSVGPVGALGP. The span at 866 to 877 shows a compositional bias: basic and acidic residues; that stretch reads RGDKGEPGDKGP. The segment covering 951-961 has biased composition (pro residues); that stretch reads GPGPPGPPGPP.

This sequence belongs to the fibrillar collagen family. Trimers of one alpha 2(I) and two alpha 1(I) chains. Interacts (via C-terminus) with TMEM131 (via PapD-L domain); the interaction is direct and is involved in assembly and TRAPPIII ER-to-Golgi transport complex-dependent secretion of collagen. Post-translationally, prolines at the third position of the tripeptide repeating unit (G-X-Y) are hydroxylated in some or all of the chains. As to expression, expressed in bones.

The protein resides in the secreted. Its subcellular location is the extracellular space. It localises to the extracellular matrix. Its function is as follows. Type I collagen is a member of group I collagen (fibrillar forming collagen). The sequence is that of Collagen alpha-2(I) chain from Neocnus dousman (Slow ground sloth).